We begin with the raw amino-acid sequence, 98 residues long: NADH-ubiquinone oxidoreductase chain 4L (98 aa).

Helical transmembrane passes span M1–I21, M36–I56, and L61–I81.

The protein belongs to the complex I subunit 4L family.

Its subcellular location is the mitochondrion membrane. It catalyses the reaction a ubiquinone + NADH + 5 H(+)(in) = a ubiquinol + NAD(+) + 4 H(+)(out). Core subunit of the mitochondrial membrane respiratory chain NADH dehydrogenase (Complex I) which catalyzes electron transfer from NADH through the respiratory chain, using ubiquinone as an electron acceptor. Part of the enzyme membrane arm which is embedded in the lipid bilayer and involved in proton translocation. The polypeptide is NADH-ubiquinone oxidoreductase chain 4L (MT-ND4L) (Didelphis virginiana (North American opossum)).